The following is a 423-amino-acid chain: MLPSFIFVYSLLATATATSPDWPEPWPSHWREPGSDLFPNQQVHLAVEEAGTGSGCRISNITSNEMAKGRTIVDFPLYAVGSLEEPKLQPLNSSGGEQWEFDGVSEDGMQSFIFGFYRDPNYAILGTGNLRVSIEFGFEDRTRFSEVYYAQRSVVETCSLGTRGLWVDKEAGWKFSFLVDAAMQEAIITLDSDTVKGRIIITSRAKPLAADGSTWPAENASTVTIPYYYWSQPIPAGTVETNVEIKGKLIKWKGMGGHERFWSSFSWFTCMRSLQAVRAMLGPYVLSYFSFTSNLIPDLTHQSVVLFHDGAVVFRSTLGTPSETEDYATVTKTYGGATTGTLKDKVTGFQLELVSPSKMRHYTFFVEHLNVGFEYILGEGVGGSGFSSQSRGGHVGLDQHEGVALTEALTFPKNSPLFRSNYV.

An N-terminal signal peptide occupies residues 1–17; the sequence is MLPSFIFVYSLLATATA. Asn-60, Asn-92, and Asn-219 each carry an N-linked (GlcNAc...) asparagine glycan.

It belongs to the Diels-Alderase family.

It functions in the pathway mycotoxin biosynthesis. Diels-Alderase; part of the gene cluster that mediates the biosynthesis of the mycotoxin pyrichalasin H, a tyrosine-derived cytochalasan that inhibits the growth of rice seedlings, but also inhibits lymphocyte capping and actin polymerization and alters cell morphology. Pyrichalasin H is indicated as the responsible agent for the genus-specific pathogenicity of M.grisea toward crabgrass. The first step in the pathway is catalyzed by the O-methyltransferase pyiA which methylates free tyrosine to generate the precursor O-methyltyrosine. The hybrid PKS-NRPS pyiS, assisted by the enoyl reductase pyiC, are responsible for fusion of the O-methyltyrosine precursor and the polyketide backbone. The polyketide synthase module (PKS) of pyiS is responsible for the synthesis of the polyketide backbone and the downstream nonribosomal peptide synthetase (NRPS) amidates the carboxyl end of the polyketide with the O-methyltyrosine precursor. As the NRPS A-domain demonstrates substrate tolerance, pyiS can also use phenylalanine, tyrosine and even para-chlorophenylalanine as amino acid precursor, which leads to the production of novel cytochalasans, including halogenated cytochalasans. Because pyiS lacks a designated enoylreductase (ER) domain, the required activity is provided the enoyl reductase pyiC. Reduction by the hydrolyase pyiE leads to 1,5-dihydropyrrolone, which is substrate for dehydration and intra-molecular Diels-Alder cyclization by the Diels-Alderase pyiF to yield the required isoindolone-fused macrocycle. The tailoring cytochrome P450 monooxygenases piyD and piyG catalyze the hydroxylation at C-18 and C-7, respectivily, whereas the short-chain dehydrogenase/reductase pyiH reduces the carbonyl at C-21 in preparation for the transfer of an acetyl group by the acetyltransferase pyiB. These 3 reactions whose order is not clear yet, lead to the production of O-methylpyrichalasin J, a deacetylated pyrichalasin H. Finally, pyiB to converts O-methylpyrichalasin J into the final product pyrichalasin H via acetylation of C-21. The polypeptide is Diels-Alderase pyiF (Pyricularia grisea (Crabgrass-specific blast fungus)).